Here is a 734-residue protein sequence, read N- to C-terminus: Photosystem I P700 chlorophyll a apoprotein A2 (734 aa).

8 helical membrane passes run 46 to 69 (IFASHLGQLAIIFLWTSGNLFHVA), 135 to 158 (LYTGAFSLLIVSTLFLVAGWLHLE), 175 to 199 (LNHHLSGLFGVSSLARAGHLVHVAI), 273 to 291 (IAHHHLAIAVVFIIAGHTY), 330 to 353 (LHFQLGLALASLGVVTSLVAQHMY), 369 to 395 (AALYTHHQYIAGFIMTGAFAHGAIFLT), 417 to 439 (AIISHLSWASLFLGFHTLGLYVH), and 517 to 535 (FPVHHAIASGLHTTTLILS). Cys559 and Cys568 together coordinate [4Fe-4S] cluster. 2 helical membrane-spanning segments follow: residues 575 to 596 (AFYPAVFWMLNTIGWVTLHWHW) and 643 to 665 (LSVWAWMFSFGHLVWATGFMFLI). Residues His654, Met662, and Tyr670 each contribute to the chlorophyll a site. Phylloquinone is bound at residue Trp671. Residues 707–727 (LVGLAHFSVGYIFTYAAFPIP) traverse the membrane as a helical segment.

The protein belongs to the PsaA/PsaB family. In terms of assembly, the PsaA/B heterodimer binds the P700 chlorophyll special pair and subsequent electron acceptors. PSI consists of a core antenna complex that captures photons, and an electron transfer chain that converts photonic excitation into a charge separation. The eukaryotic PSI reaction center is composed of at least 11 subunits. The cofactor is P700 is a chlorophyll a/chlorophyll a' dimer, A0 is one or more chlorophyll a, A1 is one or both phylloquinones and FX is a shared 4Fe-4S iron-sulfur center..

It is found in the plastid. It localises to the chloroplast thylakoid membrane. The catalysed reaction is reduced [plastocyanin] + hnu + oxidized [2Fe-2S]-[ferredoxin] = oxidized [plastocyanin] + reduced [2Fe-2S]-[ferredoxin]. In terms of biological role, psaA and PsaB bind P700, the primary electron donor of photosystem I (PSI), as well as the electron acceptors A0, A1 and FX. PSI is a plastocyanin-ferredoxin oxidoreductase, converting photonic excitation into a charge separation, which transfers an electron from the donor P700 chlorophyll pair to the spectroscopically characterized acceptors A0, A1, FX, FA and FB in turn. Oxidized P700 is reduced on the lumenal side of the thylakoid membrane by plastocyanin. The chain is Photosystem I P700 chlorophyll a apoprotein A2 from Selaginella uncinata (Blue spike-moss).